A 1335-amino-acid chain; its full sequence is Regulatory-associated protein of mTOR (1335 aa).

A phosphoserine mark is found at Ser44 and Ser122. Ser696 bears the Phosphoserine; by MAPK8 mark. Residue Thr700 is glycosylated (O-linked (GlcNAc) threonine). Thr706 bears the Phosphothreonine; by MAPK8 mark. Residues Ser719 and Ser721 each carry the phosphoserine; by RPS6KA1 modification. The residue at position 722 (Ser722) is a Phosphoserine; by AMPK and RPS6KA1. Ser738 is modified (phosphoserine). Ser791 is modified (phosphoserine; by PKA). Ser792 is subject to Phosphoserine; by AMPK. Ser836 and Ser855 each carry phosphoserine. The interval 850 to 943 (VLDTSSLTQS…PEQTADDADD (94 aa)) is disordered. Over residues 851-866 (LDTSSLTQSAPASPTN) the composition is skewed to polar residues. Ser859 is subject to Phosphoserine; by MTOR. Ser863 is modified (phosphoserine; by MAPK8, MTOR and NLK). Thr865 carries the post-translational modification Phosphothreonine. Residues 874 to 887 (AGGSPPASSTSSSS) show a composition bias toward low complexity. At Ser877 the chain carries Phosphoserine; by TBK1. Residues Lys932 and Lys948 each participate in a glycyl lysine isopeptide (Lys-Gly) (interchain with G-Cter in ubiquitin) cross-link. Ser982 carries the phosphoserine modification. WD repeat units lie at residues 1020 to 1061 (NRNP…DYFH), 1065 to 1106 (PRYT…EKNP), 1121 to 1160 (TTRGAGMVVDWEQETGLLMSSGDVRIVRIWDTDREMKVQD), 1164 to 1203 (GADSCVTSLSCDSHRSLIVAGLGDGSIRVYDRRMALSECR), 1209 to 1249 (EHTA…SVNV), 1251 to 1291 (QIVK…NNIK), and 1299 to 1335 (QRVGAISCLAFHPHWPHLAVGSNDYYISVYSVEKRVR). Residue Lys1097 is modified to N6-acetyllysine.

It belongs to the WD repeat RAPTOR family. Part of the mechanistic target of rapamycin complex 1 (mTORC1) which contains MTOR, MLST8 and RPTOR. mTORC1 associates with AKT1S1/PRAS40, which inhibits its activity. mTORC1 associates with DEPTOR, which regulates its activity. mTORC1 binds to and is inhibited by FKBP12-rapamycin. Forms a complex with MTOR under both leucine-rich and -poor conditions. Interacts with (via TOS motifs) EIF4EBP1 and RPS6KB1; interaction is independent of its association with MTOR. Binds preferentially to poorly or non-phosphorylated forms of EIF4EBP1, and this binding is critical to the ability of MTOR to catalyze phosphorylation. Interacts with ULK1 in a nutrient-dependent manner; the interaction is reduced during starvation. Interacts with GTP-bound form of RagA/RRAGA or RagB/RRAGB and GDP-bound form of RagC/RRAGC or RagD/RRAGD, promoting recruitment of mTORC1 to the lysosomes. Interacts (when phosphorylated by AMPK) with 14-3-3 protein, leading to inhibition of its activity. Interacts with SPAG5; SPAG5 competes with MTOR for RPTOR-binding, resulting in decreased mTORC1 formation. Interacts with WAC; WAC positively regulates MTOR activity by promoting the assembly of the TTT complex composed of TELO2, TTI1 and TTI2 and the RUVBL complex composed of RUVBL1 and RUVBL2 into the TTT-RUVBL complex which leads to the dimerization of the mTORC1 complex and its subsequent activation. Interacts with G3BP1. The complex formed with G3BP1 and SPAG5 is increased by oxidative stress. Interacts with HTR6. Interacts with PIH1D1. Interacts with LARP1. Interacts with BRAT1. Interacts with SIK3. Interacts with SLC38A7; this interaction mediates the recruitment of mTORC1 to the lysosome and its subsequent activation. In terms of assembly, (Microbial infection) Interacts with vaccinia virus protein F17; this interaction dysregulates mTOR. Insulin-stimulated phosphorylation at Ser-863 by MTOR and MAPK8 regulates mTORC1 activity. Phosphorylated at Ser-863 by NLK in response to stress, disrupting the interaction with small GTPases Rag (RagA/RRAGA, RagB/RRAGB, RagC/RRAGC and/or RagD/RRAGD), thereby preventing lysosome recruitment and activation of the mTORC1 complex. Osmotic stress also induces phosphorylation at Ser-696, Thr-706 and Ser-863 by MAPK8. Ser-863 phosphorylation is required for phosphorylation at Ser-855 and Ser-859. In response to nutrient limitation, phosphorylated at Ser-722 and Ser-792 by AMPK; phosphorylation promotes interaction with 14-3-3 proteins, leading to negative regulation of the mTORC1 complex. Phosphorylation at Ser-722 and Ser-792 by AMPK in response to glucose starvation inhibits O-GlcNAcylation by OGT and subsequent activation of mTORC1. In response to growth factors, phosphorylated at Ser-719, Ser-721 and Ser-722 by RPS6KA1, which stimulates mTORC1 activity. Phosphorylation at Ser-791 by PKA downstream of cAMP inhibits the mTORC1 complex. Phosphorylated at Ser-877 by TBK1, leading to negative regulation of the mTORC1 complex. Post-translationally, O-GlcNAcylated by OGT upon glucose sufficiency, promoting interaction with small GTPases Rag (RagA/RRAGA, RagB/RRAGB, RagC/RRAGC and/or RagD/RRAGD) and subsequent recruitment of mTORC1 to lysosomal membranes, leading to activation of the mTORC1 complex. Phosphorylation at Ser-722 and Ser-792 by AMPK in response to glucose starvation inhibits O-GlcNAcylation. In terms of processing, acetylation at Lys-1097 by EP300/p300 in response to leucine metabolite acetyl-coA promotes its activity, leading to activation of the mTORC1 complex. Acetylation is decreased in response to fasting. Ubiquitinated, leading to its degradation by the proteasome. Deubiquitinated by OTUB1 via a non-catalytic mechanism. Ubiquitinated by an E3 ubiquitin ligase complex containing VHL. As to expression, highly expressed in skeletal muscle, and in a lesser extent in brain, lung, small intestine, kidney and placenta. In terms of tissue distribution, widely expressed, with highest levels in nasal mucosa and pituitary and lowest in spleen.

It is found in the lysosome membrane. It localises to the cytoplasm. The protein localises to the cytoplasmic granule. Its function is as follows. Component of the mechanistic target of rapamycin complex 1 (mTORC1), an evolutionarily conserved central nutrient sensor that stimulates anabolic reactions and macromolecule biosynthesis to promote cellular biomass generation and growth. In response to nutrients, growth factors or amino acids, mTORC1 is recruited to the lysosome membrane and promotes protein, lipid and nucleotide synthesis by phosphorylating several substrates, such as ribosomal protein S6 kinase (RPS6KB1 and RPS6KB2) and EIF4EBP1 (4E-BP1). In the same time, it inhibits catabolic pathways by phosphorylating the autophagy initiation components ULK1 and ATG13, as well as transcription factor TFEB, a master regulators of lysosomal biogenesis and autophagy. The mTORC1 complex is inhibited in response to starvation and amino acid depletion. Within the mTORC1 complex, RPTOR acts both as a molecular adapter, which (1) mediates recruitment of mTORC1 to lysosomal membranes via interaction with small GTPases Rag (RagA/RRAGA, RagB/RRAGB, RagC/RRAGC and/or RagD/RRAGD), and a (2) substrate-specific adapter, which promotes substrate specificity by binding to TOS motif-containing proteins and direct them towards the active site of the MTOR kinase domain for phosphorylation. mTORC1 complex regulates many cellular processes, such as odontoblast and osteoclast differentiation or neuronal transmission. mTORC1 complex in excitatory neuronal transmission is required for the prosocial behavior induced by the psychoactive substance lysergic acid diethylamide (LSD). This chain is Regulatory-associated protein of mTOR, found in Homo sapiens (Human).